The following is a 416-amino-acid chain: Gamma-glutamyl phosphate reductase (416 aa).

It belongs to the gamma-glutamyl phosphate reductase family.

The protein localises to the cytoplasm. It carries out the reaction L-glutamate 5-semialdehyde + phosphate + NADP(+) = L-glutamyl 5-phosphate + NADPH + H(+). It functions in the pathway amino-acid biosynthesis; L-proline biosynthesis; L-glutamate 5-semialdehyde from L-glutamate: step 2/2. Its function is as follows. Catalyzes the NADPH-dependent reduction of L-glutamate 5-phosphate into L-glutamate 5-semialdehyde and phosphate. The product spontaneously undergoes cyclization to form 1-pyrroline-5-carboxylate. In Salmonella schwarzengrund (strain CVM19633), this protein is Gamma-glutamyl phosphate reductase.